We begin with the raw amino-acid sequence, 271 residues long: Mediator of RNA polymerase II transcription subunit 18 (271 aa).

The segment at 89–119 (FGGNPSSSGDPDVSMSGLEEKPSSSSSSYSY) is disordered.

The protein belongs to the Mediator complex subunit 18 family. Component of the Mediator complex.

It localises to the nucleus. In terms of biological role, component of the Mediator complex, a coactivator involved in the regulated transcription of nearly all RNA polymerase II-dependent genes. Mediator functions as a bridge to convey information from gene-specific regulatory proteins to the basal RNA polymerase II transcription machinery. Mediator is recruited to promoters by direct interactions with regulatory proteins and serves as a scaffold for the assembly of a functional preinitiation complex with RNA polymerase II and the general transcription factors. The chain is Mediator of RNA polymerase II transcription subunit 18 (srb5) from Aspergillus niger (strain ATCC MYA-4892 / CBS 513.88 / FGSC A1513).